The sequence spans 1503 residues: MTQQGPAEFTPPPECPVFEPSWEEFKDPFAFINKIRPIAEKTGICKVRPPPDWQPPFACDVDRLHFTPRIQRLNELEAQTRVKLNFLDQIAKFWDLQGCTLKIPHVERKILDLYQLNKLVADEGGFDLVCRERRWTKIAMTMGFAPGKAVGSHLRAHYERILYPYNLFQSGTNLLCLQKPGDEVNDIDKEYKPHDLLQRQNVPLQPSNTSAPARRAKRMKTESGCIKSEEGEGVENKPNLRRRMGSFVVKTEPKKEIPIQVKEEPVEIKELNPEPEKSKPKKKNIPPPPVSMVDLYVCLVCGKGNDEDRLLLCDGCDDSYHTFCLIPPLTDVPKGDWRCPKCLTQECCKPQEAFGFEQAHRDYTLKAFGEMADSFKSDYFNMPVHMVPTELVEKEFWRLVGTIQEDVTVEYGADIASKEFGSGFPIKGGRFKIAPHDEKYLQCGWNLNNMAMMTPSVLTHVTADICGMTLPWLYVGMCFSSFCWHIEDHWSYSINYLHWGEPKTWYGAPGFAAEQLEAVMKKLAPELFDSQPDLLHQLVTIMNPNTLMAHGVPIYRTNQCAGEFVITFPRSYHSGFNQGFNFAEAVNFCTVDWMPLGRQCVDHYRQLHRYCVFSHDEMVCNMAMKADCLDVVLASAVQKDMQLMIKEERELREKVRKMGVAQCELFQYDLLADDERQCVKCRTTCYLSALTCPCRPGVQVCLYHTHDLCSCPISNYTLNYRFTLDDLYPMMNAVRQRAEYYDDWASRVTEVMEAKLDKKRNVTVFRTLLEESNEQSFPENDLLRQLRLVTQDAEKCSSVAQQLLNGKRQTRYRTGKAKSPNQLTVEEMRSFVRQLYNLPCSLTQAPLLKELLNSIEDFQQHSEKLLSDEVSADAVSEIESLLEEGSQFDVFLPELPLLRERLEQARWLTGVHQAEDPVANPCGLSLESMRRLIDRGVGLTPHPSIERMMARLQELLTVSEELEENAQALLKARPPESLETLCSMLTQVEGVPAYLPNCLLLQDTVNRAKEWLQEAESLQVGGQVPVFSSLSDMVLRAHSIPVRLEPLDQLEVQVSEVQSWKETAAKTFLIKSSPFTLLEVLCPRWEMGSSLKKKKMRKMKGDCVSSGKKKFVKLDSMSDVERALSDSKDSASAMFTLAEVRLKELESLCSLRASNESKLLPTADCASLKVCVCQKPAMGAMLQCELCRDAFHSVCVRGPSDPLDPEAWLCPLCLRSTKPPLDKIRSLLSSLQRIRVRLPEGDALRYMIERSVSWQRRVREVIDSYGLSSTSQDGRGASPSQNLYRSTGHSRKLQLCGSPSRCQDWAVSGQEQTVFYTEQRCIPLQGLSPELEELMVEGLVLQVSLPETQQLYRLLLSGPPTTNTSHAEHKSYLTPPQTETDAITSAEKKAKRRMNRDEVDIRERGTKLKSKKQRMMGVEKRRERKAASVSASDMSQSEDSEEDMTLCPAESCLQPEGEEVDWVQCDCCNRWFHMICVGVSAELAAEEDYMCVSCSTSHMDRRK.

One can recognise a JmjN domain in the interval 15–56 (CPVFEPSWEEFKDPFAFINKIRPIAEKTGICKVRPPPDWQPP). Residues 80–170 (TRVKLNFLDQ…ILYPYNLFQS (91 aa)) form the ARID domain. The segment covering 202 to 211 (VPLQPSNTSA) has biased composition (polar residues). Disordered stretches follow at residues 202–223 (VPLQ…KTES) and 268–287 (IKEL…NIPP). Residues 268 to 278 (IKELNPEPEKS) are compositionally biased toward basic and acidic residues. The segment at 295–345 (LYVCLVCGKGNDEDRLLLCDGCDDSYHTFCLIPPLTDVPKGDWRCPKCLTQ) adopts a PHD-type 1 zinc-finger fold. Residues 439–605 (KYLQCGWNLN…LGRQCVDHYR (167 aa)) enclose the JmjC domain. Fe cation contacts are provided by H485, D488, and H573. Residues 1168 to 1216 (LKVCVCQKPAMGAMLQCELCRDAFHSVCVRGPSDPLDPEAWLCPLCLRS) form a PHD-type 2 zinc finger. Disordered stretches follow at residues 1362 to 1381 (TNTS…TETD) and 1403 to 1442 (ERGT…DSEE). The PHD-type 3 zinc-finger motif lies at 1444–1497 (MTLCPAESCLQPEGEEVDWVQCDCCNRWFHMICVGVSAELAAEEDYMCVSCSTS).

Belongs to the JARID1 histone demethylase family. Fe(2+) serves as cofactor.

The protein localises to the nucleus. The enzyme catalyses N(6),N(6),N(6)-trimethyl-L-lysyl(4)-[histone H3] + 3 2-oxoglutarate + 3 O2 = L-lysyl(4)-[histone H3] + 3 formaldehyde + 3 succinate + 3 CO2. Histone demethylase that demethylates 'Lys-4' of histone H3, thereby playing a central role in histone code. Does not demethylate histone H3 'Lys-9' or H3 'Lys-27'. Demethylates trimethylated, dimethylated and monomethylated H3 'Lys-4'. Acts as a transcriptional corepressor. This is Lysine-specific demethylase 5B-B (kdm5bb) from Danio rerio (Zebrafish).